The primary structure comprises 67 residues: Brevinin-1CDYa (67 aa).

An N-terminal signal peptide occupies residues 1 to 22 (MFTLKKSLLLIFFLGTINLSLC). The propeptide occupies 23–45 (EEERNADEEERRDDLEERDVEVE). Cysteines 61 and 67 form a disulfide.

Belongs to the frog skin active peptide (FSAP) family. Brevinin subfamily. As to expression, expressed by the skin glands.

It is found in the secreted. Functionally, antimicrobial peptide. Has low activity against the Gram-positive bacterium S.aureus (MIC=12.5 uM) and the Gram-negative bacterium E.coli (MIC=25 uM). Has weak hemolytic activity against human erythrocytes. The sequence is that of Brevinin-1CDYa from Rana dybowskii (Dybovsky's frog).